We begin with the raw amino-acid sequence, 208 residues long: Putative dioxygenase RF_0617 (208 aa).

This sequence belongs to the intradiol ring-cleavage dioxygenase family.

This is Putative dioxygenase RF_0617 from Rickettsia felis (strain ATCC VR-1525 / URRWXCal2) (Rickettsia azadi).